The sequence spans 453 residues: Lipase 9 (453 aa).

The N-terminal stretch at 1-14 (MLYLILFLIAPIYA) is a signal peptide. A glycan (N-linked (GlcNAc...) asparagine) is linked at asparagine 36. Cysteine 110 and cysteine 281 are joined by a disulfide. Serine 194 acts as the Charge relay system in catalysis. Residues asparagine 229, asparagine 266, and asparagine 269 are each glycosylated (N-linked (GlcNAc...) asparagine). Catalysis depends on charge relay system residues aspartate 343 and histidine 376. Residues cysteine 359 and cysteine 404 are joined by a disulfide bond. N-linked (GlcNAc...) asparagine glycosylation is present at asparagine 417.

This sequence belongs to the AB hydrolase superfamily. Lipase family. Class Lip subfamily.

The protein localises to the secreted. It carries out the reaction a triacylglycerol + H2O = a diacylglycerol + a fatty acid + H(+). In terms of biological role, secreted lipase that is able to hydrolyze both the neutral triacylglycerols and the monopalmitate ester Tween 40, allowing the use of hydrolyzed products as carbon sources. Has broad lipolytic activity, which may be important for colonization and subsequent infection, therefore contributing to the persistence and virulence in human tissue. This is Lipase 9 from Candida albicans (strain SC5314 / ATCC MYA-2876) (Yeast).